Reading from the N-terminus, the 57-residue chain is Ribosome modulation factor 2 (57 aa).

The tract at residues 1 to 24 (MKRQKRDKLGRAHSNGYQAGLGGK) is disordered.

This sequence belongs to the ribosome modulation factor family.

Its subcellular location is the cytoplasm. Its function is as follows. During stationary phase, converts 70S ribosomes to an inactive dimeric form (100S ribosomes). In Colwellia psychrerythraea (strain 34H / ATCC BAA-681) (Vibrio psychroerythus), this protein is Ribosome modulation factor 2.